The chain runs to 138 residues: Small ribosomal subunit protein uS11 (138 aa).

Positions 1–12 (MPPKKANAAGPK) are enriched in low complexity. The segment at 1 to 23 (MPPKKANAAGPKKGQKTRKREKK) is disordered. Residues 13-22 (KGQKTRKREK) are compositionally biased toward basic residues.

Belongs to the universal ribosomal protein uS11 family. As to quaternary structure, part of the 30S ribosomal subunit. Interacts with proteins S7 and S18. Binds to IF-3.

Located on the platform of the 30S subunit, it bridges several disparate RNA helices of the 16S rRNA. Forms part of the Shine-Dalgarno cleft in the 70S ribosome. The protein is Small ribosomal subunit protein uS11 of Mycobacterium leprae (strain Br4923).